Reading from the N-terminus, the 339-residue chain is RNA 3'-terminal phosphate cyclase (339 aa).

Residues glutamine 103 and 283–287 (HLADQ) contribute to the ATP site. The active-site Tele-AMP-histidine intermediate is histidine 308.

Belongs to the RNA 3'-terminal cyclase family. Type 1 subfamily.

Its subcellular location is the cytoplasm. It catalyses the reaction a 3'-end 3'-phospho-ribonucleotide-RNA + ATP = a 3'-end 2',3'-cyclophospho-ribonucleotide-RNA + AMP + diphosphate. Catalyzes the conversion of 3'-phosphate to a 2',3'-cyclic phosphodiester at the end of RNA. The mechanism of action of the enzyme occurs in 3 steps: (A) adenylation of the enzyme by ATP; (B) transfer of adenylate to an RNA-N3'P to produce RNA-N3'PP5'A; (C) and attack of the adjacent 2'-hydroxyl on the 3'-phosphorus in the diester linkage to produce the cyclic end product. The biological role of this enzyme is unknown but it is likely to function in some aspects of cellular RNA processing. This Salmonella enteritidis PT4 (strain P125109) protein is RNA 3'-terminal phosphate cyclase.